We begin with the raw amino-acid sequence, 236 residues long: Ribose-5-phosphate isomerase A (236 aa).

Substrate-binding positions include 29–32, 86–89, and 99–102; these read SGST, DGAD, and KGGG. Glutamate 108 (proton acceptor) is an active-site residue. Residue lysine 126 participates in substrate binding.

This sequence belongs to the ribose 5-phosphate isomerase family. In terms of assembly, homodimer.

It carries out the reaction aldehydo-D-ribose 5-phosphate = D-ribulose 5-phosphate. Its pathway is carbohydrate degradation; pentose phosphate pathway; D-ribose 5-phosphate from D-ribulose 5-phosphate (non-oxidative stage): step 1/1. In terms of biological role, catalyzes the reversible conversion of ribose-5-phosphate to ribulose 5-phosphate. The protein is Ribose-5-phosphate isomerase A of Prochlorococcus marinus (strain NATL2A).